Consider the following 144-residue polypeptide: Androgenic gland hormone (144 aa).

The N-terminal stretch at 1–21 (MKGLVILVSLMCLALYNRICA) is a signal peptide. 4 disulfide bridges follow: C33/C123, C42/C59, C44/C141, and C124/C132. Residues 68 to 113 (SAPEDELAFEDYEDQDYFHPRALSIPSEIEHDNEKESDAFSILSRG) constitute a propeptide, c peptide. N133 carries N-linked (GlcNAc...) (complex) asparagine glycosylation.

Androgenic gland.

The protein resides in the secreted. Functionally, controls sex differentiation and the formation of male appendages, spermatogenesis, pigmentation, and male specific behavior. This Armadillidium vulgare (Pillbug) protein is Androgenic gland hormone.